The primary structure comprises 420 residues: Putative polyketide beta-ketoacyl synthase 1 (420 aa).

Positions 3 to 414 (QRRVAITGIE…GFQSAMVLTS (412 aa)) constitute a Ketosynthase family 3 (KS3) domain. Catalysis depends on for beta-ketoacyl synthase activity residues Cys-169, His-307, and His-344.

This sequence belongs to the thiolase-like superfamily. Beta-ketoacyl-ACP synthases family.

Its pathway is antifungal biosynthesis; monensin biosynthesis. The chain is Putative polyketide beta-ketoacyl synthase 1 from Streptomyces virginiae (Streptomyces cinnamonensis).